Consider the following 88-residue polypeptide: MQEINNTQYFRVQKQPEIVVKDVIDIVYLALTEKGYNPVNQIVGYIMSGDPTYITNHRNARSLIMKVERDEILEELMHYYIDNHLKRR.

It belongs to the UPF0297 family.

The sequence is that of UPF0297 protein Cphy_2298 from Lachnoclostridium phytofermentans (strain ATCC 700394 / DSM 18823 / ISDg) (Clostridium phytofermentans).